We begin with the raw amino-acid sequence, 268 residues long: L-gamma-glutamyl-L-propargylglycine hydroxylase (268 aa).

It depends on Fe(2+) as a cofactor.

The enzyme catalyses L-gamma-glutamyl-L-propargylglycine + 2-oxoglutarate + O2 = L-gamma-glutamyl-(3R)-L-beta-ethynylserine + succinate + CO2. It functions in the pathway amino-acid metabolism. The protein operates within antibiotic biosynthesis. Functionally, involved in the biosynthesis of terminal alkyne-containing amino acids such as L-beta-ethynylserine, that are produced as antibiotics by S.cattleya. Catalyzes the hydroxylation of the dipeptide L-gamma-glutamyl-L-propargylglycine, leading to L-gamma-glutamyl-L-beta-ethynylserine. Cannot use L-propargylglycine as substrate. This chain is L-gamma-glutamyl-L-propargylglycine hydroxylase, found in Streptantibioticus cattleyicolor (strain ATCC 35852 / DSM 46488 / JCM 4925 / NBRC 14057 / NRRL 8057) (Streptomyces cattleya).